Here is a 288-residue protein sequence, read N- to C-terminus: Protease HtpX homolog (288 aa).

2 consecutive transmembrane segments (helical) span residues 1 to 21 (MHTI…LLAG) and 23 to 43 (IIGG…MNFF). Residue histidine 130 coordinates Zn(2+). The active site involves glutamate 131. Position 134 (histidine 134) interacts with Zn(2+). 2 helical membrane passes run 140–160 (ILIS…AEMA) and 175–195 (IGGL…AMII). Glutamate 204 lines the Zn(2+) pocket.

Belongs to the peptidase M48B family. The cofactor is Zn(2+).

The protein resides in the cell inner membrane. This Persephonella marina (strain DSM 14350 / EX-H1) protein is Protease HtpX homolog.